A 784-amino-acid polypeptide reads, in one-letter code: MNNSVTSNGTHEFVCEAWLGSSSGGLLRGDDPLKYSTPLLLLLISLVSSLSSVFQALLRPLANVDFVTQILAGIFLGPSALGQNIDLVKKLFNTRSYFIIESFEAISFMFISYISTAQVDMGVIKRGGKLAIINGLSLFLFPYVVGAIACTVITSNIRGTVAKNNPEQLHNLLTNQSVVYFQVAYSVLSNLKMLNSEPGRLALSSIMVANCFGWGFFLLLITFDSFLHQNYSKTTYLPTFTKVLLLVGIVVVCRPIFNWIVKRTPEGKKLKASHLCTICVMLCTATFLSETVGFPYVVGSVALGLVTPKTPPFGTGLTDKIGSFCYAVLMPCYVIGIGNKVDFFSFNLRDIISLEFLIFTISAAKFASIVLPSLYFQVPISHAVIVGFIVCIQGIYDVQIFKQLLNYKNISHEAFGIMVISAMVHSTIFTAIVKNLYGWVQRKHITYRRQTVQHYEPNKPLKILTCFYHRETVPPILTVLELSTCPSSASSHSIVSVNLEELEQNNVPLLIQHHPGHNDESSTSSSRRDQISKAFEKFRSGHDLQENVSVECFTAVAPSKTMHEDVCALAFEKETDLIIFGMADGTAAERRLCRNVRNASPSSVAVLMDQGRLPDFKNMGTAMKNGSMRINICSIFLGGADDRETLAFAVRMTNQPYVNLTVLKLVDGENVSHLNDVVEKRLDFRTIEKFRQDTMNKHNVALREVWIKEASDLVNLLREEGNNYDLIMVGIRHEKSFEVLQGLSVWSEIEELGEIGDLLVSRDLKLSASVLAVQQQLSSVVEEV.

Transmembrane regions (helical) follow at residues 38–58, 61–81, 97–117, 130–150, 201–221, 240–260, 286–306, 321–341, 351–371, 376–396, and 413–433; these read PLLLLLISLVSSLSSVFQALL, LANVDFVTQILAGIFLGPSAL, YFIIESFEAISFMFISYISTA, LAIINGLSLFLFPYVVGAIAC, LALSSIMVANCFGWGFFLLLI, FTKVLLLVGIVVVCRPIFNWI, TFLSETVGFPYVVGSVALGLV, IGSFCYAVLMPCYVIGIGNKV, IISLEFLIFTISAAKFASIVL, FQVPISHAVIVGFIVCIQGIY, and EAFGIMVISAMVHSTIFTAIV.

This sequence belongs to the monovalent cation:proton antiporter 2 (CPA2) transporter (TC 2.A.37) family. CHX (TC 2.A.37.4) subfamily. As to expression, expressed in pollen.

It localises to the membrane. May operate as a cation/H(+) antiporter. This is Cation/H(+) antiporter 26 (CHX26) from Arabidopsis thaliana (Mouse-ear cress).